Reading from the N-terminus, the 962-residue chain is MQQDYNSSNIEQKWQQKWNESKVFEAEADDRDKYFITIPYPYLNGNLHAGHTRTFTIGDVVARYKRMMGNNVLYPMGFHVTGTPIVGLAELIQNRDPETMKVYTEFHGIPVETLKGMDTPEKIVDYFSVEAERSMRSIGYSIDWRRKFTTTDPNYKKFIEWQFNLLYEKDLIVKGSHPVKWCPNDDNPVEDHDILHGEEATIIDYTLVKFKYDGMIIPCATLRPETVFGVTNLWINPDLEHVKIKVTFEGREEVWVVSKEAYRKLIFTDREVEFIEDVDASSLIGIKVTNPLNDAQVITLPASFVKGENGSGIVMSVPSHAPYDYLALRDLYDKDLREYGITEDLRELKFISLIKVKEFGEFPAIEAVEQFGVKDQDDPKAEEATKIVYRREFHGGVLKENTGKYSGMAVSKIKDVLTRDLIEMGIGEVFYEFSEPVVCRCGTPCVVNMVKGQWFLNYSNPEWKDKVYRCIENMDIIPEDLRVEFNNKVDWLKDKACARKKGLGTLLPFDNQWLIESLGDSTIYMSYYIIAKFIAMGIETEQLVPELFDHVLLKKCSLETAAERSGIDANIIEQISSDFEYWYPVDLRSSGKDLIPNHLLFFLFHHVAIFDEDKWPRAIAINGFVSLEGKKMSKSKGPLLTLNDAITNYGADISRMYILSSAEQMQDADWKNSGIETARKQIERFYNFSKDIIGSGIPTCNVENLKGIDKWMLSRLQQRILETNEALDTIRTRNALQNAYFLLFNDIRWYQKRGGNALLCEVLDVWIRLMAPFTPHICEEIWEAIGHTDNDLISLADYPQYDESLVDTQAEFTEELIGGTLSDVDEIIRVTKLTPKKAILYTSPEWKMETFKKALSMQKEGNLNPGILIKDLMRDPEMRSHGKEVPKFAQKVVSDITAMNEEKFDTLSNFDLDEKIALEENLEFFKNELGCSVEIYSADNAEYDPENKARFAYPLRPAIYLE.

The short motif at 41-51 (PYLNGNLHAGH) is the 'HIGH' region element. The short motif at 631–635 (KMSKS) is the 'KMSKS' region element. An ATP-binding site is contributed by Lys-634.

Belongs to the class-I aminoacyl-tRNA synthetase family.

It localises to the cytoplasm. It catalyses the reaction tRNA(Leu) + L-leucine + ATP = L-leucyl-tRNA(Leu) + AMP + diphosphate. This is Leucine--tRNA ligase from Methanococcoides burtonii (strain DSM 6242 / NBRC 107633 / OCM 468 / ACE-M).